A 307-amino-acid polypeptide reads, in one-letter code: Protein Y (307 aa).

The protein belongs to the ATP-dependent AMP-binding enzyme family.

Its pathway is antibiotic biosynthesis; candicidin biosynthesis. In terms of biological role, may be a p-aminobenzoic acid-CoA ligase that activates PabA to start the biosynthesis of candicidin. This chain is Protein Y, found in Streptomyces griseus.